A 733-amino-acid chain; its full sequence is MARILGVGRSSASSLNNKEDNESDVALLSPKDPNRVHTKEQLAHPASSNLDPSMQGLPAGLSLDDFIPGHLRTHIGSSSRGTRVPVIRNGGSNTLNFQFHDPAPRTVCNGCPPPRRDGSLNPDPAWYQTWPGPGSRPSMSPKPPASQHAQNWSATWTKDSKRQDKRWVKYEGIGPVDESGMPIAPRSSVDSPRDWYRRMFQQIHRKMPDLQLDWTLEDPPKVVSARASSAEPRHLGTLQRPASRPGTTETSSGRNWNHSEETSRNTFNYNFRPSSSGLHPPNQVPRHREKVENVWTEDSWNQFLHELETGHKPKKPLVDDPVEKPAQPIEVLLERELAKLSAELDKDLRAIETRLPSPKNSQAPRRPLEQPGLEQQPSARLSSAWRPNSPHAPYFSSSRPLSPHRMADGGGSPFLGRRDFVYPSSAREPSASERGSSPSRKEEKKRKAARLKFDFQAQSPKELSLQKGDIVYIHKEVDKNWLEGEHHGRLGIFPANYVEVLPADEIPKPIKPPTYQVLEYGDAVAQYTFKGDLEVELSFRKGERICLIRKVNEHWYEGRITGTGRQGIFPASYVQINREPRLRLCDDGPQLPASPNPTTTAHLSSHSHPSSIPVDPTDWGGRTSPRRSAFPFPITLQEPRSQTQSLNTPGPTLSHPRATSRPINLGPSSPNTEIHWTPYRAMYQYRPQNEDELELREGDRVDVMQQCDDGWFVGVSRRTQKFGTFPGNYVAPV.

Disordered regions lie at residues 1–51 (MARI…SNLD), 129–165 (TWPGPGSRPSMSPKPPASQHAQNWSATWTKDSKRQDK), 224–285 (SARA…NQVP), and 352–448 (ETRL…KRKA). Positions 32 to 42 (DPNRVHTKEQL) are enriched in basic and acidic residues. Polar residues predominate over residues 147-157 (QHAQNWSATWT). In terms of domain architecture, SoHo spans 164–232 (DKRWVKYEGI…VSARASSAEP (69 aa)). 2 stretches are compositionally biased toward polar residues: residues 245–256 (PGTTETSSGRNW) and 264–277 (RNTFNYNFRPSSSG). Ser412 and Ser459 each carry phosphoserine. 2 consecutive SH3 domains span residues 444–503 (KKRK…VLPA) and 518–579 (LEYG…INRE). The segment at 444 to 579 (KKRKAARLKF…PASYVQINRE (136 aa)) is binds to vinculin. The disordered stretch occupies residues 584–672 (LCDDGPQLPA…INLGPSSPNT (89 aa)). Position 594 is a phosphoserine; by MAPK1 (Ser594). The segment covering 597–613 (PTTTAHLSSHSHPSSIP) has biased composition (low complexity). 3 positions are modified to phosphoserine: Ser607, Ser610, and Ser624. Over residues 638 to 651 (EPRSQTQSLNTPGP) the composition is skewed to polar residues. In terms of domain architecture, SH3 3 spans 674–733 (IHWTPYRAMYQYRPQNEDELELREGDRVDVMQQCDDGWFVGVSRRTQKFGTFPGNYVAPV). A binds to SOS region spans residues 674-733 (IHWTPYRAMYQYRPQNEDELELREGDRVDVMQQCDDGWFVGVSRRTQKFGTFPGNYVAPV).

In terms of assembly, interacts with vinculin by the first two SH3 domains and the proline rich region of vinculin. Binds to SOS (guanine nucleotide exchange factor of RAS and RAC), through its third SH3 domain. The formation of this complex is down-regulated by phosphorylation of SOS. Interacts with SAFB2, INPPL1/SHIP2 and SRCIN1. Interacts with DLG5 through its third SH3 domain. Interacts with SOCS7 and MAPK1/ERK2. Interacts with FASLG. Post-translationally, phosphorylated at Ser-594 by MAPK1/ERK2 during cell spreading.

The protein resides in the cell junction. The protein localises to the focal adhesion. It is found in the cytoplasm. It localises to the cytoskeleton. Promotes up-regulation of actin stress fiber formation. In Mus musculus (Mouse), this protein is Vinexin (Sorbs3).